We begin with the raw amino-acid sequence, 145 residues long: Deoxyuridine 5'-triphosphate nucleotidohydrolase (145 aa).

Residues 62–64 (RSG), Asn-75, 79–81 (TVD), and Lys-89 each bind substrate.

The protein belongs to the dUTPase family. Mg(2+) is required as a cofactor.

It carries out the reaction dUTP + H2O = dUMP + diphosphate + H(+). It functions in the pathway pyrimidine metabolism; dUMP biosynthesis; dUMP from dCTP (dUTP route): step 2/2. Functionally, this enzyme is involved in nucleotide metabolism: it produces dUMP, the immediate precursor of thymidine nucleotides and it decreases the intracellular concentration of dUTP so that uracil cannot be incorporated into DNA. In Helicobacter pylori (strain P12), this protein is Deoxyuridine 5'-triphosphate nucleotidohydrolase.